The primary structure comprises 935 residues: Protein translocase subunit SecA (935 aa).

ATP is bound by residues Gln90, 108–112 (GEGKT), and Asp504.

Belongs to the SecA family. As to quaternary structure, monomer and homodimer. Part of the essential Sec protein translocation apparatus which comprises SecA, SecYEG and auxiliary proteins SecDF. Other proteins may also be involved.

The protein localises to the cell inner membrane. The protein resides in the cellular thylakoid membrane. It localises to the cytoplasm. It carries out the reaction ATP + H2O + cellular proteinSide 1 = ADP + phosphate + cellular proteinSide 2.. Functionally, part of the Sec protein translocase complex. Interacts with the SecYEG preprotein conducting channel. Has a central role in coupling the hydrolysis of ATP to the transfer of proteins into and across the cell membrane, serving as an ATP-driven molecular motor driving the stepwise translocation of polypeptide chains across the membrane. In terms of biological role, probably participates in protein translocation into and across both the cytoplasmic and thylakoid membranes in cyanobacterial cells. The polypeptide is Protein translocase subunit SecA (Gloeothece citriformis (strain PCC 7424) (Cyanothece sp. (strain PCC 7424))).